A 236-amino-acid chain; its full sequence is Sugar fermentation stimulation protein homolog (236 aa).

It belongs to the SfsA family.

The sequence is that of Sugar fermentation stimulation protein homolog from Synechococcus elongatus (strain ATCC 33912 / PCC 7942 / FACHB-805) (Anacystis nidulans R2).